The primary structure comprises 219 residues: Chloramphenicol acetyltransferase (219 aa).

Residue histidine 190 is the Proton acceptor of the active site.

It belongs to the chloramphenicol acetyltransferase family. As to quaternary structure, homotrimer.

It carries out the reaction chloramphenicol + acetyl-CoA = chloramphenicol 3-acetate + CoA. In terms of biological role, this enzyme is an effector of chloramphenicol resistance in bacteria. The protein is Chloramphenicol acetyltransferase (catB) of Clostridium butyricum.